We begin with the raw amino-acid sequence, 501 residues long: Beta-secretase 1 (501 aa).

The first 21 residues, 1–21 (MAQALPWLLLWMGSGVLPAHG), serve as a signal peptide directing secretion. A propeptide spanning residues 22–45 (SQPGIRLPLRSGLGGAPLGLRLPR) is cleaved from the precursor. At 22 to 457 (SQPGIRLPLR…PQTDESTLMT (436 aa)) the chain is on the extracellular side. Positions 39-58 (LGLRLPRETDEESEEPGRRG) are disordered. The Peptidase A1 domain maps to 75–416 (YYVEMTLGSP…DRARKRIGFA (342 aa)). The active site involves aspartate 93. Lysine 126 is subject to N6-acetyllysine. N-linked (GlcNAc...) asparagine glycosylation is found at asparagine 153, asparagine 172, and asparagine 223. Disulfide bonds link cysteine 216-cysteine 420, cysteine 278-cysteine 443, and cysteine 330-cysteine 380. N6-acetyllysine is present on residues lysine 275, lysine 279, and lysine 285. Aspartate 289 is a catalytic residue. Lysine 299, lysine 300, and lysine 307 each carry N6-acetyllysine. A glycan (N-linked (GlcNAc...) asparagine) is linked at asparagine 354. A helical membrane pass occupies residues 458–478 (IAYVMAAICALFMLPLCLMVC). S-palmitoyl cysteine attachment occurs at residues cysteine 474, cysteine 478, cysteine 482, and cysteine 485. Topologically, residues 479 to 501 (QWRCLRCLRHQHDDFADDISLLK) are cytoplasmic. An interaction with RTN3 region spans residues 479 to 501 (QWRCLRCLRHQHDDFADDISLLK). Residues 496 to 500 (DISLL) carry the DXXLL motif. Serine 498 bears the Phosphoserine mark. Lysine 501 participates in a covalent cross-link: Glycyl lysine isopeptide (Lys-Gly) (interchain with G-Cter in ubiquitin).

The protein belongs to the peptidase A1 family. As to quaternary structure, monomer. Interacts (via DXXLL motif) with GGA1, GGA2 and GGA3 (via their VHS domain); the interaction highly increases when BACE1 is phosphorylated at Ser-498. Interacts with RTN1; RTN2; RTN3 and RTN4; the interaction leads to inhibition of amyloid precursor protein processing. Interacts with SNX6. Interacts with PCSK9. Interacts with NAT8 and NAT8B. Interacts with BIN1. Interacts (via extracellular domain) with ADAM10 (via extracellular domain). Interacts with SORL1; this interaction may affect binding with APP and hence reduce APP cleavage. Interacts with NRDC AND NRG1. Palmitoylation mediates lipid raft localization. Post-translationally, acetylated in the endoplasmic reticulum at Lys-126, Lys-275, Lys-279, Lys-285, Lys-299, Lys-300 and Lys-307. Acetylation by NAT8 and NAT8B is transient and deacetylation probably occurs in the Golgi. Acetylation regulates the maturation, the transport to the plasma membrane, the stability and the expression of the protein. In terms of processing, ubiquitinated at Lys-501, ubiquitination leads to lysosomal degradation. Monoubiquitinated and 'Lys-63'-linked polyubitinated. Deubiquitnated by USP8; inhibits lysosomal degradation. Phosphorylation at Ser-498 is required for interaction with GGA1 and retrograded transport from endosomal compartments to the trans-Golgi network. Non-phosphorylated BACE1 enters a direct recycling route to the cell surface. Post-translationally, N-Glycosylated. Addition of a bisecting N-acetylglucosamine by MGAT3 blocks lysosomal targeting, further degradation and is required for maintaining stability under stress conditions.

The protein resides in the cell membrane. It localises to the golgi apparatus. It is found in the trans-Golgi network. Its subcellular location is the endoplasmic reticulum. The protein localises to the endosome. The protein resides in the cell surface. It localises to the cytoplasmic vesicle membrane. It is found in the membrane raft. Its subcellular location is the lysosome. The protein localises to the late endosome. The protein resides in the early endosome. It localises to the recycling endosome. It is found in the cell projection. Its subcellular location is the axon. The protein localises to the dendrite. It carries out the reaction Broad endopeptidase specificity. Cleaves Glu-Val-Asn-Leu-|-Asp-Ala-Glu-Phe in the Swedish variant of Alzheimer's amyloid precursor protein.. With respect to regulation, inhibited by RTN3 and RTN4. In terms of biological role, responsible for the proteolytic processing of the amyloid precursor protein (APP). Cleaves at the N-terminus of the A-beta peptide sequence, between residues 671 and 672 of APP, leads to the generation and extracellular release of beta-cleaved soluble APP, and a corresponding cell-associated C-terminal fragment which is later released by gamma-secretase. Cleaves CHL1. This is Beta-secretase 1 (BACE1) from Bos taurus (Bovine).